The chain runs to 113 residues: Large ribosomal subunit protein bL17 (113 aa).

This sequence belongs to the bacterial ribosomal protein bL17 family. As to quaternary structure, part of the 50S ribosomal subunit. Contacts protein L32.

The protein is Large ribosomal subunit protein bL17 of Natranaerobius thermophilus (strain ATCC BAA-1301 / DSM 18059 / JW/NM-WN-LF).